We begin with the raw amino-acid sequence, 923 residues long: Neuropilin-1a (923 aa).

Residues methionine 1–alanine 19 form the signal peptide. Topologically, residues leucine 20–proline 856 are extracellular. Cystine bridges form between cysteine 25–cysteine 52, cysteine 80–cysteine 102, and cysteine 145–cysteine 171. 2 consecutive CUB domains span residues cysteine 25–phenylalanine 139 and cysteine 145–leucine 263. Residue asparagine 148 is glycosylated (N-linked (GlcNAc...) asparagine). Glutamate 193, aspartate 207, and aspartate 248 together coordinate Ca(2+). A disulfide bridge connects residues cysteine 204 and cysteine 226. An N-linked (GlcNAc...) asparagine glycan is attached at asparagine 259. Cystine bridges form between cysteine 273–cysteine 422 and cysteine 429–cysteine 581. F5/8 type C domains are found at residues cysteine 273–cysteine 422 and cysteine 429–cysteine 581. Asparagine 520 carries N-linked (GlcNAc...) asparagine glycosylation. The disordered stretch occupies residues threonine 587–threonine 624. The O-linked (Xyl...) (chondroitin sulfate) serine; alternate glycan is linked to serine 612. An O-linked (Xyl...) (heparan sulfate) serine; alternate glycan is attached at serine 612. One can recognise an MAM domain in the interval phenylalanine 642–aspartate 811. Residues isoleucine 857–valine 877 form a helical membrane-spanning segment. At valine 878–alanine 923 the chain is on the cytoplasmic side.

This sequence belongs to the neuropilin family.

Its subcellular location is the membrane. Its function is as follows. Receptor involved in the development of the cardiovascular system, in angiogenesis, in the formation of certain neuronal circuits and in organogenesis outside the nervous system. It mediates the chemorepulsant activity of semaphorins. Regulates angiogenesis through a VEGF-dependent pathway. In Danio rerio (Zebrafish), this protein is Neuropilin-1a (nrp1a).